The chain runs to 432 residues: ATP-dependent RNA helicase RhlB (432 aa).

The Q motif motif lies at 9–37 (KKFSDFALHPKVIEALEKKGFSNCTQIQA). The region spanning 40-219 (LPITVKGHDI…FEQMNNPEYV (180 aa)) is the Helicase ATP-binding domain. 53 to 60 (AQTGTGKT) provides a ligand contact to ATP. The short motif at 165-168 (DEAD) is the DEAD box element. The Helicase C-terminal domain maps to 245–390 (RLLQTLIEEE…VSKYNSDALL (146 aa)). Positions 393–432 (LPEPKRRHRPRQGQPRRNNSAPRRGNNTQRNNRNKRPSHS) are disordered. Low complexity predominate over residues 404 to 423 (QGQPRRNNSAPRRGNNTQRN).

The protein belongs to the DEAD box helicase family. RhlB subfamily. Component of the RNA degradosome, which is a multiprotein complex involved in RNA processing and mRNA degradation.

It is found in the cytoplasm. The catalysed reaction is ATP + H2O = ADP + phosphate + H(+). DEAD-box RNA helicase involved in RNA degradation. Has RNA-dependent ATPase activity and unwinds double-stranded RNA. The polypeptide is ATP-dependent RNA helicase RhlB (Proteus mirabilis (strain HI4320)).